The chain runs to 153 residues: UPF0756 membrane protein lmo1568 (153 aa).

Transmembrane regions (helical) follow at residues methionine 6 to isoleucine 26, tryptophan 54 to phenylalanine 74, serine 80 to alanine 100, and leucine 117 to isoleucine 137.

Belongs to the UPF0756 family.

The protein localises to the cell membrane. The chain is UPF0756 membrane protein lmo1568 from Listeria monocytogenes serovar 1/2a (strain ATCC BAA-679 / EGD-e).